The primary structure comprises 228 residues: Biosynthetic peptidoglycan transglycosylase (228 aa).

The chain crosses the membrane as a helical span at residues 8-28 (GVAALLALFLLYQLWIFGHIV).

This sequence belongs to the glycosyltransferase 51 family.

The protein resides in the cell inner membrane. It catalyses the reaction [GlcNAc-(1-&gt;4)-Mur2Ac(oyl-L-Ala-gamma-D-Glu-L-Lys-D-Ala-D-Ala)](n)-di-trans,octa-cis-undecaprenyl diphosphate + beta-D-GlcNAc-(1-&gt;4)-Mur2Ac(oyl-L-Ala-gamma-D-Glu-L-Lys-D-Ala-D-Ala)-di-trans,octa-cis-undecaprenyl diphosphate = [GlcNAc-(1-&gt;4)-Mur2Ac(oyl-L-Ala-gamma-D-Glu-L-Lys-D-Ala-D-Ala)](n+1)-di-trans,octa-cis-undecaprenyl diphosphate + di-trans,octa-cis-undecaprenyl diphosphate + H(+). The protein operates within cell wall biogenesis; peptidoglycan biosynthesis. Functionally, peptidoglycan polymerase that catalyzes glycan chain elongation from lipid-linked precursors. This Laribacter hongkongensis (strain HLHK9) protein is Biosynthetic peptidoglycan transglycosylase.